A 401-amino-acid chain; its full sequence is Phosphoglycerate kinase, cytosolic (401 aa).

(2R)-3-phosphoglycerate-binding residues include valine 24, aspartate 25, asparagine 27, arginine 41, serine 63, histidine 64, glycine 66, arginine 67, arginine 122, histidine 154, and arginine 155. An ADP-binding site is contributed by glycine 200. Position 200 (glycine 200) interacts with CDP. The AMP site is built by lysine 202 and lysine 206. Lysine 206 lines the ATP pocket. Position 224 (glycine 224) interacts with ADP. Glycine 224 provides a ligand contact to CDP. AMP is bound by residues glycine 225 and glycine 297. Residues glycine 225 and glycine 297 each coordinate ATP. CDP-binding residues include glycine 322 and phenylalanine 327. Phenylalanine 327 is a binding site for ADP. Glutamate 328 contacts AMP. Residues glutamate 328, aspartate 359, and serine 360 each contribute to the ATP site. A Mg(2+)-binding site is contributed by aspartate 359.

The protein belongs to the phosphoglycerate kinase family. In terms of assembly, monomer. Requires Mg(2+) as cofactor.

It is found in the cytoplasm. The catalysed reaction is (2R)-3-phosphoglycerate + ATP = (2R)-3-phospho-glyceroyl phosphate + ADP. Its pathway is carbohydrate degradation; glycolysis; pyruvate from D-glyceraldehyde 3-phosphate: step 2/5. In Nicotiana tabacum (Common tobacco), this protein is Phosphoglycerate kinase, cytosolic.